A 381-amino-acid polypeptide reads, in one-letter code: Alanine racemase, catabolic (381 aa).

K55 functions as the Proton acceptor; specific for D-alanine in the catalytic mechanism. K55 is subject to N6-(pyridoxal phosphate)lysine. Residue R154 coordinates substrate. Y276 acts as the Proton acceptor; specific for L-alanine in catalysis. M322 is a binding site for substrate.

Belongs to the alanine racemase family. The cofactor is pyridoxal 5'-phosphate.

The catalysed reaction is L-alanine = D-alanine. Isomerizes L-alanine to D-alanine which is then oxidized to pyruvate by DadA. This chain is Alanine racemase, catabolic (dadB), found in Mesorhizobium japonicum (strain LMG 29417 / CECT 9101 / MAFF 303099) (Mesorhizobium loti (strain MAFF 303099)).